Here is a 620-residue protein sequence, read N- to C-terminus: Tyrosine-protein kinase ITK/TSK (620 aa).

The PH domain occupies 4–111; that stretch reads FILLEEQLIK…WVLALKEETR (108 aa). Residues 113-149 form a Btk-type zinc finger; sequence NNSLVPKYHPNFWMDGKWRCCSQLEKLATGCAQYDPT. Residues His-121, Cys-132, Cys-133, and Cys-143 each coordinate Zn(2+). The SH3 domain maps to 171-231; sequence PEETVVIALY…PSSYLVEKSP (61 aa). Tyr-180 is subject to Phosphotyrosine; by autocatalysis. The SH2 domain maps to 239-338; the sequence is WYNKSISRDK…GLVTRLRYPV (100 aa). The Protein kinase domain occupies 363 to 615; that stretch reads LTFVQEIGSG…SRLLRQLAEI (253 aa). ATP-binding positions include 369–377 and Lys-391; that span reads IGSGQFGLV. The Proton acceptor role is filled by Asp-482. Tyr-512 carries the phosphotyrosine; by LCK modification. A Phosphoserine modification is found at Ser-565.

The protein belongs to the protein kinase superfamily. Tyr protein kinase family. TEC subfamily. In terms of assembly, homooligomerizes; this association negatively regulates kinase activity. Interacts with PPIA/CYPA; this interaction regulates TCR signal strength via a proline-directed conformational switch in ITK. Interacts with THEMIS. Interacts with FASLG. Interacts with VAV1; this interaction is important for VAV1 localization and TCR-induced actin polarization. Interacts with TBX21. Zn(2+) is required as a cofactor. In terms of processing, phosphorylated at Tyr-512 in the activation loop of the kinase domain by LCK. Subsequent autophosphorylation at Tyr-180 leads to the kinase activation. The autophosphorylated Tyr-180 lies within the substrate binding sequence of the SH3 domain. Ubiquitinated. As to expression, T-cell lines and natural killer cell lines.

Its subcellular location is the cytoplasm. It localises to the nucleus. The catalysed reaction is L-tyrosyl-[protein] + ATP = O-phospho-L-tyrosyl-[protein] + ADP + H(+). Functionally, tyrosine kinase that plays an essential role in regulation of the adaptive immune response. Regulates the development, function and differentiation of conventional T-cells and nonconventional NKT-cells. When antigen presenting cells (APC) activate T-cell receptor (TCR), a series of phosphorylation lead to the recruitment of ITK to the cell membrane, in the vicinity of the stimulated TCR receptor, where it is phosphorylated by LCK. Phosphorylation leads to ITK autophosphorylation and full activation. Once activated, phosphorylates PLCG1, leading to the activation of this lipase and subsequent cleavage of its substrates. In turn, the endoplasmic reticulum releases calcium in the cytoplasm and the nuclear activator of activated T-cells (NFAT) translocates into the nucleus to perform its transcriptional duty. Phosphorylates 2 essential adapter proteins: the linker for activation of T-cells/LAT protein and LCP2. Then, a large number of signaling molecules such as VAV1 are recruited and ultimately lead to lymphokine production, T-cell proliferation and differentiation. Required for TCR-mediated calcium response in gamma-delta T-cells, may also be involved in the modulation of the transcriptomic signature in the Vgamma2-positive subset of immature gamma-delta T-cells. Phosphorylates TBX21 at 'Tyr-530' and mediates its interaction with GATA3. The polypeptide is Tyrosine-protein kinase ITK/TSK (ITK) (Homo sapiens (Human)).